Here is a 493-residue protein sequence, read N- to C-terminus: Glycerol kinase (493 aa).

Thr-11 contacts ADP. Residues Thr-11, Thr-12, and Ser-13 each coordinate ATP. Thr-11 is a binding site for sn-glycerol 3-phosphate. Arg-15 is an ADP binding site. Sn-glycerol 3-phosphate contacts are provided by Arg-80, Glu-81, Tyr-132, and Asp-241. Arg-80, Glu-81, Tyr-132, Asp-241, and Gln-242 together coordinate glycerol. Residues Thr-263 and Gly-306 each contribute to the ADP site. 4 residues coordinate ATP: Thr-263, Gly-306, Gln-310, and Gly-408. Gly-408 lines the ADP pocket.

This sequence belongs to the FGGY kinase family.

The catalysed reaction is glycerol + ATP = sn-glycerol 3-phosphate + ADP + H(+). The protein operates within polyol metabolism; glycerol degradation via glycerol kinase pathway; sn-glycerol 3-phosphate from glycerol: step 1/1. With respect to regulation, inhibited by fructose 1,6-bisphosphate (FBP). Its function is as follows. Key enzyme in the regulation of glycerol uptake and metabolism. Catalyzes the phosphorylation of glycerol to yield sn-glycerol 3-phosphate. The protein is Glycerol kinase of Cereibacter sphaeroides (strain ATCC 17025 / ATH 2.4.3) (Rhodobacter sphaeroides).